Here is a 210-residue protein sequence, read N- to C-terminus: WASH complex subunit 3 (210 aa).

Residues 49–73 are a coiled coil; it reads EEKLASISLRIQQIETTLSILEAKL. Positions 173 to 210 are disordered; sequence LDPNLLDTPDAPVPDAVKKNTLDQDDDSDDGSESSFSD. The segment covering 195–204 has biased composition (acidic residues); it reads DQDDDSDDGS.

Belongs to the CCDC53 family. Component of the WASH complex.

This chain is WASH complex subunit 3, found in Salmo salar (Atlantic salmon).